Here is a 658-residue protein sequence, read N- to C-terminus: Glycogen debranching enzyme (658 aa).

Residue Asp336 is the Nucleophile of the active site. The Proton donor role is filled by Glu371.

Belongs to the glycosyl hydrolase 13 family.

It carries out the reaction Hydrolysis of (1-&gt;6)-alpha-D-glucosidic linkages to branches with degrees of polymerization of three or four glucose residues in limit dextrin.. It functions in the pathway glycan degradation; glycogen degradation. Removes maltotriose and maltotetraose chains that are attached by 1,6-alpha-linkage to the limit dextrin main chain, generating a debranched limit dextrin. The polypeptide is Glycogen debranching enzyme (Klebsiella pneumoniae subsp. pneumoniae (strain ATCC 700721 / MGH 78578)).